A 109-amino-acid chain; its full sequence is Somatostatin-2 (109 aa).

A signal peptide spans 1 to 16 (MQFLASLVSFLLVVWS). Positions 17–80 (VKATALPVED…EPLENKLEER (64 aa)) are excised as a propeptide. An intrachain disulfide couples Cys-98 to Cys-109.

It belongs to the somatostatin family.

The protein localises to the secreted. Its function is as follows. Somatostatin inhibits the release of somatotropin. The sequence is that of Somatostatin-2 (sst2) from Protopterus annectens (African lungfish).